The sequence spans 941 residues: MWTEKAAAMAEAQESGCRNKSSISRQTPVAGAVTEDDEAQGVFKPMDLNHVIKLLEETNKDGLEEKQLKFVKKLVQCYQNGLPLRDLAQIFKILNLCAGKIKNQPRFIESAYDIIKLCGLPFLKKKVSDEITYAEDTANSIALLGDLMKIPSSELRIQICKCIVDFYHAEPPKKHIPGYQQACSSYKIQMAEVGGLAKTMVQAVTLLENQLVEKLWVLKVLQHLSTSEVNCSIMMKAQAASGICAHLNDPDPSGQLLFRSSEILWNLLEKSSKEEILPQLSNLECLLALKEVFKNLFMRGFSHYDRQLRNDILVITTIIAQNPEAPMIECGFAKDLILFATFNEVKSQNILVKGLKLSNSYEDFELKKLLFNIIVILCKDLPTIQLLIEGSVVLALFTYVKKPEKQRTIDWSAAQYEELQLHAIATLSSVAPLLIEEYMSCQGNAQVLAFLEWCEIEDSFFSHGNSFHGTGGRGNKFAQMRYSLRLLRAMVYLEDETVNTDLCEKGTIQQMIGIFKNIISKTNEKEEAIVLEIQSDILLILSGLCEHHIQRKEIFGTEGVDIVLHVMKTDPRKLQSGLGYNVLLFSTLDSIWCCILGCYPSEDYFLEKEGIFLLLDVLALNEKKFCNLILGIMVEFCDNPKTAAHVNAWRGKKDQTAASLLIKLWRKEEKELGVKRDKNGKIIDTKKPLFTSFQEEQKIIPLPANCPSIAVMDVSENIRAKIYAILGKLDFENLPGLSAEDFVTLCIIHRYLDFKIGEIWNEIYEEIKLEKLRPVTTDKKALEAITTASENIGKMVASLQSEIIESQACQDVQNEQKVYAKIQATHKQRELANKSWGNFLARTSNAKTLKKAKRLQEKAIKASRYHERPQHAIFHPTDIKGLNTTVPSGGVVTVESTPARLVGGPLADTDIALKKLPIRGGALQRVKAVKIEEAPKKSIPT.

Its subcellular location is the cell projection. It localises to the cilium. It is found in the flagellum. Cilium- and flagellum-associated protein. In the olfactory epithelium, regulates the speed of activation and termination of the odor response and thus contributes to the robustness of olfactory transduction pathways. Required for sperm flagellum assembly and stability. This is Cilia- and flagella-associated protein 69 from Callithrix jacchus (White-tufted-ear marmoset).